The chain runs to 115 residues: NADH-ubiquinone oxidoreductase chain 3 (115 aa).

The next 3 helical transmembrane spans lie at 4 to 24 (LMILSVNIILSTCLIMIAFWL), 55 to 75 (FFLVAITFLLFDLEIALLLPL), and 84 to 104 (INMMMSTAFILVSILALGLAY).

It belongs to the complex I subunit 3 family. As to quaternary structure, core subunit of respiratory chain NADH dehydrogenase (Complex I) which is composed of 45 different subunits. Interacts with TMEM186. Interacts with TMEM242.

It localises to the mitochondrion inner membrane. It catalyses the reaction a ubiquinone + NADH + 5 H(+)(in) = a ubiquinol + NAD(+) + 4 H(+)(out). Core subunit of the mitochondrial membrane respiratory chain NADH dehydrogenase (Complex I) which catalyzes electron transfer from NADH through the respiratory chain, using ubiquinone as an electron acceptor. Essential for the catalytic activity of complex I. This is NADH-ubiquinone oxidoreductase chain 3 from Podomys floridanus (Florida mouse).